The following is a 141-amino-acid chain: D-aminoacyl-tRNA deacylase (141 aa).

Residues 133 to 134 (GP) carry the Gly-cisPro motif, important for rejection of L-amino acids motif.

It belongs to the DTD family. Homodimer.

The protein resides in the cytoplasm. The enzyme catalyses glycyl-tRNA(Ala) + H2O = tRNA(Ala) + glycine + H(+). It catalyses the reaction a D-aminoacyl-tRNA + H2O = a tRNA + a D-alpha-amino acid + H(+). Its function is as follows. An aminoacyl-tRNA editing enzyme that deacylates mischarged D-aminoacyl-tRNAs. Also deacylates mischarged glycyl-tRNA(Ala), protecting cells against glycine mischarging by AlaRS. Acts via tRNA-based rather than protein-based catalysis; rejects L-amino acids rather than detecting D-amino acids in the active site. By recycling D-aminoacyl-tRNA to D-amino acids and free tRNA molecules, this enzyme counteracts the toxicity associated with the formation of D-aminoacyl-tRNA entities in vivo and helps enforce protein L-homochirality. In Streptomyces coelicolor (strain ATCC BAA-471 / A3(2) / M145), this protein is D-aminoacyl-tRNA deacylase.